Here is a 514-residue protein sequence, read N- to C-terminus: MSKDNKKAGIEPKVFFPPLIIVGILCWLTVRDLDASNEVINAVFSYVTNVWGWAFEWYMVIMFGGWFWLVFGRYAKKRLGDEKPEFSTASWIFMMFASCTSAAVLFWGSIEIYYYISSPPFGMEGYSAPAKEIGLAYSLFHWGPLPWATYSFLSVAFAYFFFVRKMEVIRPSSTLTPLVGEKHVNGLFGTVVDNFYLVALILAMGTSLGLATPLVTECIQYLFGIPHTLQLDAIIISCWILLNAICVAFGLQKGVKIASDVRTYLSFLMLGWVFIVGGASFIVNYFTDSVGTLLMYMPRMLFYTDPIGKGGFPQAWTVFYWAWWVIYAIQMSIFLARISKGRTVRELCLGMVSGLTAGTWLIWTILGGNTLQLIDQNILNIPQLIDQYGVPRAIIETWAALPLSTATMWGFFILCFIATVTLINACSYTLAMSTCRSMKEGAEPPLLVRIGWSVLVGIIGIILLALGGLKPIQTAIIAGGCPLFFVNIMVTLSFIKDAKVHWKDCSPYTQKMTH.

Over 1–11 (MSKDNKKAGIE) the chain is Cytoplasmic. A helical transmembrane segment spans residues 12–30 (PKVFFPPLIIVGILCWLTV). Over 31-42 (RDLDASNEVINA) the chain is Periplasmic. The helical transmembrane segment at 43 to 68 (VFSYVTNVWGWAFEWYMVIMFGGWFW) threads the bilayer. The Cytoplasmic segment spans residues 69–91 (LVFGRYAKKRLGDEKPEFSTASW). The chain crosses the membrane as a helical span at residues 92–112 (IFMMFASCTSAAVLFWGSIEI). Residues 113–131 (YYYISSPPFGMEGYSAPAK) are Periplasmic-facing. The helical transmembrane segment at 132 to 154 (EIGLAYSLFHWGPLPWATYSFLS) threads the bilayer. The Cytoplasmic portion of the chain corresponds to 155–185 (VAFAYFFFVRKMEVIRPSSTLTPLVGEKHVN). A helical membrane pass occupies residues 186–216 (GLFGTVVDNFYLVALILAMGTSLGLATPLVT). Residues 217–230 (ECIQYLFGIPHTLQ) are Periplasmic-facing. Residues 231 to 249 (LDAIIISCWILLNAICVAF) form a helical membrane-spanning segment. At 250 to 251 (GL) the chain is on the cytoplasmic side. Residues 252–277 (QKGVKIASDVRTYLSFLMLGWVFIVG) form a helical membrane-spanning segment. The Periplasmic portion of the chain corresponds to 278–311 (GASFIVNYFTDSVGTLLMYMPRMLFYTDPIGKGG). The chain crosses the membrane as a helical span at residues 312-335 (FPQAWTVFYWAWWVIYAIQMSIFL). The Cytoplasmic segment spans residues 336–347 (ARISKGRTVREL). A helical transmembrane segment spans residues 348 to 369 (CLGMVSGLTAGTWLIWTILGGN). Residues 370–404 (TLQLIDQNILNIPQLIDQYGVPRAIIETWAALPLS) lie on the Periplasmic side of the membrane. Residues 405–434 (TATMWGFFILCFIATVTLINACSYTLAMST) traverse the membrane as a helical segment. The Cytoplasmic portion of the chain corresponds to 435 to 445 (CRSMKEGAEPP). The chain crosses the membrane as a helical span at residues 446–464 (LLVRIGWSVLVGIIGIILL). The Periplasmic portion of the chain corresponds to 465 to 468 (ALGG). Residues 469–492 (LKPIQTAIIAGGCPLFFVNIMVTL) form a helical membrane-spanning segment. The Cytoplasmic segment spans residues 493 to 514 (SFIKDAKVHWKDCSPYTQKMTH).

The protein belongs to the BCCT transporter (TC 2.A.15) family. CaiT subfamily. As to quaternary structure, homotrimer.

The protein localises to the cell inner membrane. The catalysed reaction is 4-(trimethylamino)butanoate(in) + (R)-carnitine(out) = 4-(trimethylamino)butanoate(out) + (R)-carnitine(in). It functions in the pathway amine and polyamine metabolism; carnitine metabolism. Its function is as follows. Catalyzes the exchange of L-carnitine for gamma-butyrobetaine. This chain is L-carnitine/gamma-butyrobetaine antiporter, found in Proteus mirabilis (strain HI4320).